Here is a 653-residue protein sequence, read N- to C-terminus: Choline transporter-like protein 3 (653 aa).

The helical transmembrane segment at 34–54 threads the bilayer; sequence WLFLFFLFWTGLVFIMGYSVV. N-linked (GlcNAc...) asparagine glycosylation is found at Asn136 and Asn151. 5 consecutive transmembrane segments (helical) span residues 213-233, 243-263, 284-304, 334-354, and 384-404; these read DTIL…MFTF, IFIS…WWLY, VLGF…LIFV, LWTF…LLSL, and LIGL…TIAG. 3 N-linked (GlcNAc...) asparagine glycosylation sites follow: Asn412, Asn503, and Asn521. A run of 2 helical transmembrane segments spans residues 534 to 554 and 563 to 583; these read FIIF…GLMA and VWAV…HSFL. The interval 632-653 is disordered; sequence RAQQDKHSLRNEEGTELQAIVR. Residues 634–644 show a composition bias toward basic and acidic residues; that stretch reads QQDKHSLRNEE.

It belongs to the CTL (choline transporter-like) family.

Its subcellular location is the membrane. The chain is Choline transporter-like protein 3 (SLC44A3) from Homo sapiens (Human).